We begin with the raw amino-acid sequence, 115 residues long: Macrophage migration inhibitory factor (115 aa).

The Proton acceptor; via imino nitrogen role is filled by Pro2. Substrate is bound by residues Lys33 and Ile65. N6-acetyllysine; alternate is present on Lys78. Lys78 carries the N6-succinyllysine; alternate modification. Substrate is bound at residue Asn98.

This sequence belongs to the MIF family. Homotrimer. Interacts with CXCR2 extracellular domain. Interacts with the CD74 extracellular domain, USO1, COPS5 and BNIPL.

It is found in the secreted. Its subcellular location is the cytoplasm. The catalysed reaction is 3-phenylpyruvate = enol-phenylpyruvate. It carries out the reaction L-dopachrome = 5,6-dihydroxyindole-2-carboxylate. Functionally, pro-inflammatory cytokine involved in the innate immune response to bacterial pathogens. The expression of MIF at sites of inflammation suggests a role as mediator in regulating the function of macrophages in host defense. Counteracts the anti-inflammatory activity of glucocorticoids. Has phenylpyruvate tautomerase and dopachrome tautomerase activity (in vitro), but the physiological substrate is not known. It is not clear whether the tautomerase activity has any physiological relevance, and whether it is important for cytokine activity. The protein is Macrophage migration inhibitory factor of Homo sapiens (Human).